The sequence spans 475 residues: Aspartyl/glutamyl-tRNA(Asn/Gln) amidotransferase subunit B (475 aa).

It belongs to the GatB/GatE family. GatB subfamily. In terms of assembly, heterotrimer of A, B and C subunits.

The enzyme catalyses L-glutamyl-tRNA(Gln) + L-glutamine + ATP + H2O = L-glutaminyl-tRNA(Gln) + L-glutamate + ADP + phosphate + H(+). The catalysed reaction is L-aspartyl-tRNA(Asn) + L-glutamine + ATP + H2O = L-asparaginyl-tRNA(Asn) + L-glutamate + ADP + phosphate + 2 H(+). In terms of biological role, allows the formation of correctly charged Asn-tRNA(Asn) or Gln-tRNA(Gln) through the transamidation of misacylated Asp-tRNA(Asn) or Glu-tRNA(Gln) in organisms which lack either or both of asparaginyl-tRNA or glutaminyl-tRNA synthetases. The reaction takes place in the presence of glutamine and ATP through an activated phospho-Asp-tRNA(Asn) or phospho-Glu-tRNA(Gln). This is Aspartyl/glutamyl-tRNA(Asn/Gln) amidotransferase subunit B from Bacillus anthracis (strain A0248).